A 302-amino-acid polypeptide reads, in one-letter code: DNA-directed RNA polymerase II subunit rpb3 (302 aa).

It belongs to the archaeal Rpo3/eukaryotic RPB3 RNA polymerase subunit family. Component of the RNA polymerase II (Pol II) complex consisting of 12 subunits.

It is found in the nucleus. In terms of biological role, DNA-dependent RNA polymerase catalyzes the transcription of DNA into RNA using the four ribonucleoside triphosphates as substrates. Component of RNA polymerase II which synthesizes mRNA precursors and many functional non-coding RNAs. Pol II is the central component of the basal RNA polymerase II transcription machinery. It is composed of mobile elements that move relative to each other. Rpb3 is part of the core element with the central large cleft and the clamp element that moves to open and close the cleft. This chain is DNA-directed RNA polymerase II subunit rpb3 (polr2c), found in Dictyostelium discoideum (Social amoeba).